We begin with the raw amino-acid sequence, 620 residues long: Chaperone protein HscA homolog (620 aa).

The protein belongs to the heat shock protein 70 family.

Functionally, chaperone involved in the maturation of iron-sulfur cluster-containing proteins. Has a low intrinsic ATPase activity which is markedly stimulated by HscB. The chain is Chaperone protein HscA homolog from Colwellia psychrerythraea (strain 34H / ATCC BAA-681) (Vibrio psychroerythus).